The sequence spans 61 residues: MAKKSMIVKAAREPKFKVRGYTRCQICGRPHSVIRDFGICRVCFRKMANEGLIPGVRKSSW.

Zn(2+) is bound by residues Cys24, Cys27, Cys40, and Cys43.

This sequence belongs to the universal ribosomal protein uS14 family. Zinc-binding uS14 subfamily. In terms of assembly, part of the 30S ribosomal subunit. Contacts proteins S3 and S10. Requires Zn(2+) as cofactor.

Binds 16S rRNA, required for the assembly of 30S particles and may also be responsible for determining the conformation of the 16S rRNA at the A site. The sequence is that of Small ribosomal subunit protein uS14 from Sulfurimonas denitrificans (strain ATCC 33889 / DSM 1251) (Thiomicrospira denitrificans (strain ATCC 33889 / DSM 1251)).